Here is a 525-residue protein sequence, read N- to C-terminus: tRNA-2-methylthio-N(6)-dimethylallyladenosine synthase (525 aa).

The 117-residue stretch at 14-130 (RTYQVRTYGC…LPTLLERARH (117 aa)) folds into the MTTase N-terminal domain. Residues cysteine 23, cysteine 59, cysteine 93, cysteine 167, cysteine 171, and cysteine 174 each contribute to the [4Fe-4S] cluster site. The Radical SAM core domain occupies 153–400 (RESAYAGWVS…IELQERISLE (248 aa)). A TRAM domain is found at 403–482 (QAQVGRTLEL…PHHLIADGAL (80 aa)).

This sequence belongs to the methylthiotransferase family. MiaB subfamily. In terms of assembly, monomer. It depends on [4Fe-4S] cluster as a cofactor.

The protein resides in the cytoplasm. The enzyme catalyses N(6)-dimethylallyladenosine(37) in tRNA + (sulfur carrier)-SH + AH2 + 2 S-adenosyl-L-methionine = 2-methylsulfanyl-N(6)-dimethylallyladenosine(37) in tRNA + (sulfur carrier)-H + 5'-deoxyadenosine + L-methionine + A + S-adenosyl-L-homocysteine + 2 H(+). Functionally, catalyzes the methylthiolation of N6-(dimethylallyl)adenosine (i(6)A), leading to the formation of 2-methylthio-N6-(dimethylallyl)adenosine (ms(2)i(6)A) at position 37 in tRNAs that read codons beginning with uridine. The polypeptide is tRNA-2-methylthio-N(6)-dimethylallyladenosine synthase (Mycobacterium sp. (strain MCS)).